Reading from the N-terminus, the 702-residue chain is Ribosomal RNA large subunit methyltransferase K/L (702 aa).

The region spanning 43-154 is the THUMP domain; it reads LIYQSLMWSR…KETASIALDL (112 aa).

It belongs to the methyltransferase superfamily. RlmKL family.

The protein resides in the cytoplasm. The enzyme catalyses guanosine(2445) in 23S rRNA + S-adenosyl-L-methionine = N(2)-methylguanosine(2445) in 23S rRNA + S-adenosyl-L-homocysteine + H(+). It catalyses the reaction guanosine(2069) in 23S rRNA + S-adenosyl-L-methionine = N(2)-methylguanosine(2069) in 23S rRNA + S-adenosyl-L-homocysteine + H(+). Functionally, specifically methylates the guanine in position 2445 (m2G2445) and the guanine in position 2069 (m7G2069) of 23S rRNA. In Salmonella typhi, this protein is Ribosomal RNA large subunit methyltransferase K/L.